A 187-amino-acid chain; its full sequence is MMMNSPLDYDVLLEIMSYCPATEMAKFRLLSKECNKRSYEMSFINRHLHRTNSFLGYIFYYKDNKWFRNHSCFVSGVDEKDKNRINLAFLPPLCNVSIEACDTHHGILLCVDVVFKGRQKIPDYIVCKPATKQYRIIPNPKTRFGTVATGLMVISSNPFRYKIIRVSDTWARVGRDGVYNLRESLFE.

In terms of domain architecture, F-box spans 2-49; it reads MMNSPLDYDVLLEIMSYCPATEMAKFRLLSKECNKRSYEMSFINRHLH.

The protein is F-box protein At5g41720 of Arabidopsis thaliana (Mouse-ear cress).